Here is a 398-residue protein sequence, read N- to C-terminus: Arginine biosynthesis bifunctional protein ArgJ (398 aa).

Residues threonine 148, lysine 174, threonine 185, glutamate 271, asparagine 393, and threonine 398 each contribute to the substrate site. The active-site Nucleophile is the threonine 185.

Belongs to the ArgJ family. As to quaternary structure, heterotetramer of two alpha and two beta chains.

The protein resides in the cytoplasm. The catalysed reaction is N(2)-acetyl-L-ornithine + L-glutamate = N-acetyl-L-glutamate + L-ornithine. It carries out the reaction L-glutamate + acetyl-CoA = N-acetyl-L-glutamate + CoA + H(+). It participates in amino-acid biosynthesis; L-arginine biosynthesis; L-ornithine and N-acetyl-L-glutamate from L-glutamate and N(2)-acetyl-L-ornithine (cyclic): step 1/1. It functions in the pathway amino-acid biosynthesis; L-arginine biosynthesis; N(2)-acetyl-L-ornithine from L-glutamate: step 1/4. In terms of biological role, catalyzes two activities which are involved in the cyclic version of arginine biosynthesis: the synthesis of N-acetylglutamate from glutamate and acetyl-CoA as the acetyl donor, and of ornithine by transacetylation between N(2)-acetylornithine and glutamate. The sequence is that of Arginine biosynthesis bifunctional protein ArgJ from Listeria monocytogenes serotype 4b (strain F2365).